A 141-amino-acid polypeptide reads, in one-letter code: Vesicle-associated membrane protein 4 (141 aa).

The tract at residues 1–51 (MPPKFKRHLNDDDVTGSVKSERRNLLEDDSDEEEDFFLRGPSGPRFGPRND) is disordered. The Cytoplasmic segment spans residues 1 to 118 (MPPKFKRHLN…MWWRGCKIKA (118 aa)). 2 positions are modified to phosphoserine: serine 17 and serine 30. The 61-residue stretch at 52 to 112 (KIKHVQNQVD…KQLRRQMWWR (61 aa)) folds into the v-SNARE coiled-coil homology domain. Residues 119–139 (IMALAAAILLLMIIILIVVKF) form a helical; Anchor for type IV membrane protein membrane-spanning segment. Topologically, residues 140 to 141 (RT) are vesicular.

This sequence belongs to the synaptobrevin family. As to quaternary structure, identified in a complex containing STX6, STX12, VAMP4 and VTI1A. Interacts with BAIAP3; this interaction is increased in the presence of calcium. (Microbial infection) Targeted and hydrolyzed by C.botulinum neurotoxin type X (BoNT/X) which hydrolyzes the 87-Arg-|-Ser-88 bond and probably inhibits neurotransmitter release. It remains unknown whether BoNT/X is ever produced, or what organisms it targets.

Its subcellular location is the golgi apparatus. It is found in the trans-Golgi network membrane. Functionally, involved in the pathway that functions to remove an inhibitor (probably synaptotagmin-4) of calcium-triggered exocytosis during the maturation of secretory granules. May be a marker for this sorting pathway that is critical for remodeling the secretory response of granule. This chain is Vesicle-associated membrane protein 4 (Vamp4), found in Mus musculus (Mouse).